The chain runs to 196 residues: ATP-dependent Clp protease proteolytic subunit (196 aa).

Residue Ser99 is the Nucleophile of the active site. His124 is an active-site residue.

Belongs to the peptidase S14 family. As to quaternary structure, fourteen ClpP subunits assemble into 2 heptameric rings which stack back to back to give a disk-like structure with a central cavity, resembling the structure of eukaryotic proteasomes.

Its subcellular location is the cytoplasm. The catalysed reaction is Hydrolysis of proteins to small peptides in the presence of ATP and magnesium. alpha-casein is the usual test substrate. In the absence of ATP, only oligopeptides shorter than five residues are hydrolyzed (such as succinyl-Leu-Tyr-|-NHMec, and Leu-Tyr-Leu-|-Tyr-Trp, in which cleavage of the -Tyr-|-Leu- and -Tyr-|-Trp bonds also occurs).. In terms of biological role, cleaves peptides in various proteins in a process that requires ATP hydrolysis. Has a chymotrypsin-like activity. Plays a major role in the degradation of misfolded proteins. This chain is ATP-dependent Clp protease proteolytic subunit, found in Campylobacter lari (strain RM2100 / D67 / ATCC BAA-1060).